Reading from the N-terminus, the 369-residue chain is Anhydro-N-acetylmuramic acid kinase (369 aa).

12-19 lines the ATP pocket; sequence GTSLDGVD.

This sequence belongs to the anhydro-N-acetylmuramic acid kinase family.

It catalyses the reaction 1,6-anhydro-N-acetyl-beta-muramate + ATP + H2O = N-acetyl-D-muramate 6-phosphate + ADP + H(+). It functions in the pathway amino-sugar metabolism; 1,6-anhydro-N-acetylmuramate degradation. The protein operates within cell wall biogenesis; peptidoglycan recycling. Catalyzes the specific phosphorylation of 1,6-anhydro-N-acetylmuramic acid (anhMurNAc) with the simultaneous cleavage of the 1,6-anhydro ring, generating MurNAc-6-P. Is required for the utilization of anhMurNAc either imported from the medium or derived from its own cell wall murein, and thus plays a role in cell wall recycling. The polypeptide is Anhydro-N-acetylmuramic acid kinase (Escherichia coli O1:K1 / APEC).